Consider the following 426-residue polypeptide: tRNA(Ile)-lysidine synthase (426 aa).

19 to 24 (SGGLDS) is an ATP binding site.

This sequence belongs to the tRNA(Ile)-lysidine synthase family.

It is found in the cytoplasm. The catalysed reaction is cytidine(34) in tRNA(Ile2) + L-lysine + ATP = lysidine(34) in tRNA(Ile2) + AMP + diphosphate + H(+). In terms of biological role, ligates lysine onto the cytidine present at position 34 of the AUA codon-specific tRNA(Ile) that contains the anticodon CAU, in an ATP-dependent manner. Cytidine is converted to lysidine, thus changing the amino acid specificity of the tRNA from methionine to isoleucine. This is tRNA(Ile)-lysidine synthase from Neisseria meningitidis serogroup A / serotype 4A (strain DSM 15465 / Z2491).